A 132-amino-acid chain; its full sequence is NADH-quinone oxidoreductase subunit A 2 (132 aa).

3 helical membrane-spanning segments follow: residues 9–29 (AWAF…MLGL), 66–86 (LVAM…LWAV), and 93–113 (WAGF…LFYL).

Belongs to the complex I subunit 3 family. As to quaternary structure, NDH-1 is composed of 13 different subunits. Subunits NuoA, H, J, K, L, M, N constitute the membrane sector of the complex.

The protein resides in the cell inner membrane. It carries out the reaction a quinone + NADH + 5 H(+)(in) = a quinol + NAD(+) + 4 H(+)(out). NDH-1 shuttles electrons from NADH, via FMN and iron-sulfur (Fe-S) centers, to quinones in the respiratory chain. The immediate electron acceptor for the enzyme in this species is believed to be ubiquinone. Couples the redox reaction to proton translocation (for every two electrons transferred, four hydrogen ions are translocated across the cytoplasmic membrane), and thus conserves the redox energy in a proton gradient. In Pseudomonas paraeruginosa (strain DSM 24068 / PA7) (Pseudomonas aeruginosa (strain PA7)), this protein is NADH-quinone oxidoreductase subunit A 2.